Reading from the N-terminus, the 158-residue chain is SUMO-conjugating enzyme UBC9 (158 aa).

A UBC core domain is found at Ile4–Pro157. Residues Arg13–Lys18 form an interaction with sumo1 region. The active-site Glycyl thioester intermediate is Cys93.

The protein belongs to the ubiquitin-conjugating enzyme family. Forms a tight complex with RANGAP1 and RANBP2.

Its subcellular location is the nucleus. Its pathway is protein modification; protein sumoylation. Functionally, accepts the ubiquitin-like proteins SUMO1, SUMO2 and SUMO3 from the UBLE1A-UBLE1B E1 complex and catalyzes their covalent attachment to other proteins with the help of an E3 ligase such as RANBP2 or CBX4. Essential for nuclear architecture and chromosome segregation. In Pagrus major (Red sea bream), this protein is SUMO-conjugating enzyme UBC9 (ube2i).